The sequence spans 89 residues: Small ribosomal subunit protein uS15 (89 aa).

This sequence belongs to the universal ribosomal protein uS15 family. As to quaternary structure, part of the 30S ribosomal subunit. Forms a bridge to the 50S subunit in the 70S ribosome, contacting the 23S rRNA.

In terms of biological role, one of the primary rRNA binding proteins, it binds directly to 16S rRNA where it helps nucleate assembly of the platform of the 30S subunit by binding and bridging several RNA helices of the 16S rRNA. Forms an intersubunit bridge (bridge B4) with the 23S rRNA of the 50S subunit in the ribosome. This Bordetella parapertussis (strain 12822 / ATCC BAA-587 / NCTC 13253) protein is Small ribosomal subunit protein uS15.